Consider the following 265-residue polypeptide: Tryptophan synthase alpha chain (265 aa).

Active-site proton acceptor residues include Glu49 and Asp60.

It belongs to the TrpA family. In terms of assembly, tetramer of two alpha and two beta chains.

It carries out the reaction (1S,2R)-1-C-(indol-3-yl)glycerol 3-phosphate + L-serine = D-glyceraldehyde 3-phosphate + L-tryptophan + H2O. It functions in the pathway amino-acid biosynthesis; L-tryptophan biosynthesis; L-tryptophan from chorismate: step 5/5. The alpha subunit is responsible for the aldol cleavage of indoleglycerol phosphate to indole and glyceraldehyde 3-phosphate. The sequence is that of Tryptophan synthase alpha chain from Desulfatibacillum aliphaticivorans.